The following is a 399-amino-acid chain: Tryptophan synthase beta chain (399 aa).

K92 carries the N6-(pyridoxal phosphate)lysine modification.

This sequence belongs to the TrpB family. As to quaternary structure, tetramer of two alpha and two beta chains. The cofactor is pyridoxal 5'-phosphate.

It catalyses the reaction (1S,2R)-1-C-(indol-3-yl)glycerol 3-phosphate + L-serine = D-glyceraldehyde 3-phosphate + L-tryptophan + H2O. Its pathway is amino-acid biosynthesis; L-tryptophan biosynthesis; L-tryptophan from chorismate: step 5/5. Functionally, the beta subunit is responsible for the synthesis of L-tryptophan from indole and L-serine. This is Tryptophan synthase beta chain from Bordetella pertussis (strain Tohama I / ATCC BAA-589 / NCTC 13251).